Consider the following 182-residue polypeptide: Peptidyl-tRNA hydrolase (182 aa).

Y14 provides a ligand contact to tRNA. Catalysis depends on H19, which acts as the Proton acceptor. Residues Y65, N67, and N113 each contribute to the tRNA site.

The protein belongs to the PTH family. As to quaternary structure, monomer.

The protein localises to the cytoplasm. The catalysed reaction is an N-acyl-L-alpha-aminoacyl-tRNA + H2O = an N-acyl-L-amino acid + a tRNA + H(+). Hydrolyzes ribosome-free peptidyl-tRNAs (with 1 or more amino acids incorporated), which drop off the ribosome during protein synthesis, or as a result of ribosome stalling. In terms of biological role, catalyzes the release of premature peptidyl moieties from peptidyl-tRNA molecules trapped in stalled 50S ribosomal subunits, and thus maintains levels of free tRNAs and 50S ribosomes. The protein is Peptidyl-tRNA hydrolase of Rickettsia peacockii (strain Rustic).